A 761-amino-acid polypeptide reads, in one-letter code: uncharacterized protein (761 aa).

A CR-type zinc finger spans residues 1 to 84 (MIVKCPICDG…CGGSGKVVKC (84 aa)). The S1 motif domain maps to 135–200 (GKFYKGVVTR…EKREIDFKYI (66 aa)).

This is an uncharacterized protein from Methanocaldococcus jannaschii (strain ATCC 43067 / DSM 2661 / JAL-1 / JCM 10045 / NBRC 100440) (Methanococcus jannaschii).